A 70-amino-acid polypeptide reads, in one-letter code: Large ribosomal subunit protein bL31 (70 aa).

Zn(2+) is bound by residues Cys16, Cys18, Cys37, and Cys40.

It belongs to the bacterial ribosomal protein bL31 family. Type A subfamily. As to quaternary structure, part of the 50S ribosomal subunit. Requires Zn(2+) as cofactor.

In terms of biological role, binds the 23S rRNA. The chain is Large ribosomal subunit protein bL31 from Klebsiella pneumoniae (strain 342).